Consider the following 876-residue polypeptide: Leucine--tRNA ligase (876 aa).

The 'HIGH' region motif lies at 43–53; that stretch reads PYPSGRIHMGH. A 'KMSKS' region motif is present at residues 630–634; it reads KMSKS. Residue lysine 633 participates in ATP binding.

This sequence belongs to the class-I aminoacyl-tRNA synthetase family.

The protein resides in the cytoplasm. It carries out the reaction tRNA(Leu) + L-leucine + ATP = L-leucyl-tRNA(Leu) + AMP + diphosphate. The sequence is that of Leucine--tRNA ligase from Methylocella silvestris (strain DSM 15510 / CIP 108128 / LMG 27833 / NCIMB 13906 / BL2).